A 523-amino-acid polypeptide reads, in one-letter code: Monocarboxylate transporter 7 (523 aa).

Residues 1 to 21 lie on the Cytoplasmic side of the membrane; it reads MTQNKLKLCSKANVYTEVPDG. The chain crosses the membrane as a helical span at residues 22 to 42; sequence GWGWAVAVSFFFVEVFTYGII. Topologically, residues 43 to 62 are extracellular; it reads KTFGVFFNDLMDSFNESNSR. A helical transmembrane segment spans residues 63 to 83; it reads ISWIISICVFVLTFSAPLATV. The Cytoplasmic segment spans residues 84–91; that stretch reads LSNRFGHR. Residues 92-112 form a helical membrane-spanning segment; it reads LVVMLGGLLVSTGMVAASFSQ. Residues 113 to 118 are Extracellular-facing; that stretch reads EVSHMY. Residues 119–139 traverse the membrane as a helical segment; the sequence is VAIGIISGLGYCFSFLPTVTI. At 140-149 the chain is on the cytoplasmic side; it reads LSQYFGKRRS. A helical transmembrane segment spans residues 150–170; it reads IVTAVASTGECFAVFAFAPAI. At 171–184 the chain is on the extracellular side; it reads MALKERIGWRYSLL. A helical transmembrane segment spans residues 185–205; the sequence is FVGLLQLNIVIFGALLRPIFI. Residues 206 to 299 lie on the Cytoplasmic side of the membrane; the sequence is RGPASPKIVI…KEKSFICYAL (94 aa). S234, S237, S240, and S247 each carry phosphoserine. A helical membrane pass occupies residues 300 to 320; that stretch reads FGLFATLGFFAPSLYIIPLGI. Topologically, residues 321–330 are extracellular; sequence SLGIDQDRAA. A helical membrane pass occupies residues 331–351; it reads FLLSTMAIAEVFGRIGAGFVL. Residues 352–358 lie on the Cytoplasmic side of the membrane; it reads NREPIRK. A helical membrane pass occupies residues 359 to 379; the sequence is IYIELICVILLTVSLFAFTFA. Over 380–381 the chain is Extracellular; the sequence is TE. Residues 382–402 form a helical membrane-spanning segment; sequence FWGLMSCSIFFGFMVGTIGGT. At 403 to 423 the chain is on the cytoplasmic side; it reads HIPLLAEDDVVGIEKMSSAAG. A helical transmembrane segment spans residues 424–444; sequence VYIFIQSIAGLAGPPLAGLLV. The Extracellular portion of the chain corresponds to 445–452; that stretch reads DQSKIYSR. A helical transmembrane segment spans residues 453-473; it reads AFYSCAAGMALAAVCLALVRP. The Cytoplasmic portion of the chain corresponds to 474–523; sequence CKMGLCQHHHSGETKVVSHRGKTLQDIPEDFLEMDLAKNEHRVHVQMEPV.

It belongs to the major facilitator superfamily. Monocarboxylate porter (TC 2.A.1.13) family. In terms of assembly, forms functional complexes with BSG/CD147 or EMB/GP70 ancillary proteins.

Its subcellular location is the basolateral cell membrane. The catalysed reaction is taurine(out) = taurine(in). In terms of biological role, monocarboxylate transporter selective for taurine. May associate with BSG/CD147 or EMB/GP70 ancillary proteins to mediate facilitative efflux or influx of taurine across the plasma membrane. The transport is pH- and sodium-independent. Rather low-affinity, is likely effective for taurine transport in tissues where taurine is present at high concentrations. The polypeptide is Monocarboxylate transporter 7 (Homo sapiens (Human)).